A 305-amino-acid chain; its full sequence is tRNA dimethylallyltransferase (305 aa).

9–16 (GPTGAGKT) is a binding site for ATP. 11 to 16 (TGAGKT) serves as a coordination point for substrate. Interaction with substrate tRNA regions lie at residues 34-37 (DSRQ) and 158-162 (QRIVR).

This sequence belongs to the IPP transferase family. In terms of assembly, monomer. The cofactor is Mg(2+).

It carries out the reaction adenosine(37) in tRNA + dimethylallyl diphosphate = N(6)-dimethylallyladenosine(37) in tRNA + diphosphate. Its function is as follows. Catalyzes the transfer of a dimethylallyl group onto the adenine at position 37 in tRNAs that read codons beginning with uridine, leading to the formation of N6-(dimethylallyl)adenosine (i(6)A). This is tRNA dimethylallyltransferase from Oleidesulfovibrio alaskensis (strain ATCC BAA-1058 / DSM 17464 / G20) (Desulfovibrio alaskensis).